We begin with the raw amino-acid sequence, 60 residues long: uncharacterized protein (60 aa).

This is an uncharacterized protein from Enterobacteria phage T4 (Bacteriophage T4).